Reading from the N-terminus, the 237-residue chain is Probable transcriptional regulatory protein Exig_1693 (237 aa).

The protein belongs to the TACO1 family. YeeN subfamily.

It localises to the cytoplasm. In Exiguobacterium sibiricum (strain DSM 17290 / CCUG 55495 / CIP 109462 / JCM 13490 / 255-15), this protein is Probable transcriptional regulatory protein Exig_1693.